The sequence spans 314 residues: Jacalin-related lectin 9 (314 aa).

The signal sequence occupies residues 1–23; sequence MIFIYIFLFLSSAIIDSNGFAMA. Jacalin-type lectin domains follow at residues 24–165 and 168–313; these read QKLE…YLTK and PTKS…YFSP.

This sequence belongs to the jacalin lectin family.

This is Jacalin-related lectin 9 (JAL9) from Arabidopsis thaliana (Mouse-ear cress).